We begin with the raw amino-acid sequence, 406 residues long: MRFVDEAVITVEAGDGGNGVASFRREKFVPFGGPDGGDGGRGGSIYIQADDDTSTLVDYRYTRKLRAERGKNGAGANCTGRGGEDVVLKVPVGTTIVDTDSGDIIGDLVEDGQRVMVASGGEGGLGNTHFKSSTNRAPRKCTTGTKGEFREIRLELKVLADVGLLGMPNAGKSTFIRAVSAAKPKVADYPFTTMVPNLGVVDADRHRSFVMADIPGLIEGAAEGAGLGIRFLKHLARTRILLHIIDVQPIDGSDPAHNAKAIMNELAKFSPTLANLPIVLVLNKLDQIAEESREEWCQHILDELQWTGPVFKTSGLLEEGTKEVVYYLMDQIEQQREREVEDPEYAAEVRAFREQLEAETREQTIAAKEAYRAMRKAQRLESMMDDDDDFDDDEDDGDVESIYVRD.

Residues 1 to 159 (MRFVDEAVIT…REIRLELKVL (159 aa)) enclose the Obg domain. The interval 120–143 (GGEGGLGNTHFKSSTNRAPRKCTT) is disordered. The OBG-type G domain maps to 160-333 (ADVGLLGMPN…VVYYLMDQIE (174 aa)). Residues 166–173 (GMPNAGKS), 191–195 (FTTMV), 213–216 (DIPG), 283–286 (NKLD), and 314–316 (SGL) each bind GTP. The Mg(2+) site is built by S173 and T193. The interval 381-406 (ESMMDDDDDFDDDEDDGDVESIYVRD) is disordered. Acidic residues predominate over residues 383-399 (MMDDDDDFDDDEDDGDV).

It belongs to the TRAFAC class OBG-HflX-like GTPase superfamily. OBG GTPase family. Monomer. Requires Mg(2+) as cofactor.

It is found in the cytoplasm. In terms of biological role, an essential GTPase which binds GTP, GDP and possibly (p)ppGpp with moderate affinity, with high nucleotide exchange rates and a fairly low GTP hydrolysis rate. Plays a role in control of the cell cycle, stress response, ribosome biogenesis and in those bacteria that undergo differentiation, in morphogenesis control. The chain is GTPase Obg from Acinetobacter baumannii (strain SDF).